The sequence spans 221 residues: Large ribosomal subunit protein uL4 (221 aa).

Positions 56–83 (HATKTRGMVSGGGRKPWKQKGTGRARQG) are disordered.

Belongs to the universal ribosomal protein uL4 family. Part of the 50S ribosomal subunit.

One of the primary rRNA binding proteins, this protein initially binds near the 5'-end of the 23S rRNA. It is important during the early stages of 50S assembly. It makes multiple contacts with different domains of the 23S rRNA in the assembled 50S subunit and ribosome. In terms of biological role, forms part of the polypeptide exit tunnel. This is Large ribosomal subunit protein uL4 from Bifidobacterium adolescentis (strain ATCC 15703 / DSM 20083 / NCTC 11814 / E194a).